The sequence spans 421 residues: Vinorine synthase (421 aa).

Active-site proton acceptor residues include H160 and D362.

This sequence belongs to the plant acyltransferase family. Monomer. Mainly expressed in roots and, to a lower level, in leaves.

The enzyme catalyses 16-epivellosimine + acetyl-CoA = vinorine + CoA. It participates in alkaloid biosynthesis; ajmaline biosynthesis. With respect to regulation, complete inhibition by 4-(2-aminoethyl)-benzenesulfonyl fluoride (AEBSF), N-tosyl-L-phenylalanine chloromethylketone (TPCK), Hg(2+) and diethyl-pyrocarbonate (DEPC). 50% inhibition by N-(N-(L-3-trans-carboxirane-2-carbonyl)-L-leucyl)-agmanitine (E-64), N-alpha-p-tosyl-L-lysine chloromethylketone (TLCK) and phenylmethylsulfonyl fluoride (PMSF). Its function is as follows. Acetyltransferase involved in the biosynthesis of ajmaline-type monoterpenoid indole alkaloids (MIAs) natural products, important plant-derived pharmaceuticals used in the therapy of heart disorders. Catalyzes the conversion of 16-epivellosimine to vinorine, precursor of vomilenine, an intermediate chemical in the biosynthesis of ajmaline. Acts on gardneral, but not on polyneuridine aldehyde or N-methylgardneral. In Rauvolfia serpentina (Serpentine wood), this protein is Vinorine synthase.